The primary structure comprises 351 residues: Methylthioribose-1-phosphate isomerase (351 aa).

Residues 51-53 (RGA), R94, and Q199 each bind substrate. Catalysis depends on D240, which acts as the Proton donor. 250–251 (NK) lines the substrate pocket.

Belongs to the eIF-2B alpha/beta/delta subunits family. MtnA subfamily. In terms of assembly, homodimer.

It carries out the reaction 5-(methylsulfanyl)-alpha-D-ribose 1-phosphate = 5-(methylsulfanyl)-D-ribulose 1-phosphate. Its pathway is amino-acid biosynthesis; L-methionine biosynthesis via salvage pathway; L-methionine from S-methyl-5-thio-alpha-D-ribose 1-phosphate: step 1/6. Its function is as follows. Catalyzes the interconversion of methylthioribose-1-phosphate (MTR-1-P) into methylthioribulose-1-phosphate (MTRu-1-P). The chain is Methylthioribose-1-phosphate isomerase from Bacillus cereus (strain ATCC 10987 / NRS 248).